The following is a 421-amino-acid chain: Tol-Pal system protein TolA (421 aa).

At 1-13 (MSKATEQNDKLKR) the chain is on the cytoplasmic side. The chain crosses the membrane as a helical span at residues 14 to 34 (AIIISAVLHVILFAALIWSSF). Residues 35 to 421 (DENIEASAGG…FKNAPLDFKP (387 aa)) are Periplasmic-facing. The interval 48–310 (SSIDAVMVDS…LSSGKNAPKT (263 aa)) is domain II (alpha-helical). The disordered stretch occupies residues 65–266 (KRMQSQESSA…KAAADKKAAA (202 aa)). Basic and acidic residues-rich tracts occupy residues 73–175 (SAKR…EAEA) and 206–266 (EARK…KAAA). 13 consecutive repeat copies span residues 224 to 229 (EKKAAA), 230 to 234 (EKAAA), 235 to 240 (DKKAAA), 241 to 245 (EKAAA), 246 to 250 (DKKAA), 251 to 255 (EKAAA), 256 to 260 (EKAAA), 261 to 266 (DKKAAA), 267 to 271 (EKAAA), 272 to 277 (DKKAAA), 278 to 282 (AKAAA), 283 to 287 (EKAAA), and 288 to 292 (AKAAA). Residues 224 to 292 (EKKAAAEKAA…EKAAAAKAAA (69 aa)) are 13 X tandem repeats of [EDA]-K(1,2)-A(2,4). The tract at residues 300–336 (ELSSGKNAPKTGGGAKGNNASPAGSGNTKNNGASGAD) is disordered. Positions 311-421 (GGGAKGNNAS…FKNAPLDFKP (111 aa)) are domain III (functional). The segment covering 317–332 (NNASPAGSGNTKNNGA) has biased composition (polar residues). Cysteines 363 and 388 form a disulfide.

The protein belongs to the TolA family. The Tol-Pal system is composed of five core proteins: the inner membrane proteins TolA, TolQ and TolR, the periplasmic protein TolB and the outer membrane protein Pal. They form a network linking the inner and outer membranes and the peptidoglycan layer. TolA interacts with TolQ and TolR via its N-terminal domain. Interacts with CpoB, and with the trimeric porins OmpC, OmpF, PhoE and LamB via its central domain. Interacts with TolB via its C-terminal domain. Also interacts with Pal via its C-terminal domain. This interaction is proton motive force dependent and requires TolQ and TolR.

The protein localises to the cell inner membrane. Its function is as follows. Part of the Tol-Pal system, which plays a role in outer membrane invagination during cell division and is important for maintaining outer membrane integrity. The Tol-Pal system is also required for polar localization of chemoreceptors clusters. The system also appears to be required for the activity of several outer membrane-localized enzymes with cell wall remodeling activity. Is involved in the uptake of group A colicins (colicins A, E1, E2, E3, and K) and in the uptake of filamentous phage DNA. This is Tol-Pal system protein TolA from Escherichia coli (strain K12).